The chain runs to 508 residues: Lysine--tRNA ligase (508 aa).

Glu418 and Glu425 together coordinate Mg(2+).

Belongs to the class-II aminoacyl-tRNA synthetase family. Homodimer. Mg(2+) serves as cofactor.

The protein resides in the cytoplasm. It catalyses the reaction tRNA(Lys) + L-lysine + ATP = L-lysyl-tRNA(Lys) + AMP + diphosphate. This is Lysine--tRNA ligase from Burkholderia cenocepacia (strain HI2424).